We begin with the raw amino-acid sequence, 523 residues long: Light-independent protochlorophyllide reductase subunit B (523 aa).

Asp36 provides a ligand contact to [4Fe-4S] cluster. Asp290 acts as the Proton donor in catalysis. Residue 425–426 (GL) coordinates substrate.

The protein belongs to the ChlB/BchB/BchZ family. As to quaternary structure, protochlorophyllide reductase is composed of three subunits; ChlL, ChlN and ChlB. Forms a heterotetramer of two ChlB and two ChlN subunits. [4Fe-4S] cluster is required as a cofactor.

The catalysed reaction is chlorophyllide a + oxidized 2[4Fe-4S]-[ferredoxin] + 2 ADP + 2 phosphate = protochlorophyllide a + reduced 2[4Fe-4S]-[ferredoxin] + 2 ATP + 2 H2O. It participates in porphyrin-containing compound metabolism; chlorophyll biosynthesis (light-independent). Functionally, component of the dark-operative protochlorophyllide reductase (DPOR) that uses Mg-ATP and reduced ferredoxin to reduce ring D of protochlorophyllide (Pchlide) to form chlorophyllide a (Chlide). This reaction is light-independent. The NB-protein (ChlN-ChlB) is the catalytic component of the complex. The sequence is that of Light-independent protochlorophyllide reductase subunit B from Prochlorococcus marinus (strain MIT 9301).